A 379-amino-acid polypeptide reads, in one-letter code: Caffeyl-CoA reductase-Etf complex subunit CarC (379 aa).

FAD-binding positions include 122 to 131 (FALTEPGAGS) and 155 to 157 (FIT). S131 is a substrate binding site. 239–242 (DVGR) serves as a coordination point for substrate. FAD is bound by residues R267, Q278, and 335 to 339 (QIHGG). The Proton acceptor role is filled by E362. Substrate is bound at residue G363. 364 to 366 (TSQ) provides a ligand contact to FAD.

The protein belongs to the acyl-CoA dehydrogenase family. Part of the homotrimeric caffeyl-CoA reductase-Etf complex composed of (R)-2-hydroxyisocaproyl-CoA dehydratase CarC, and the electron transfer flavoprotein (ETF) alpha (CarE) and beta (CarD) subunits. The cofactor is FAD.

The protein localises to the cytoplasm. The enzyme catalyses hydrocaffeoyl-CoA + 2 reduced [2Fe-2S]-[ferredoxin] + 2 NAD(+) = (E)-caffeoyl-CoA + 2 oxidized [2Fe-2S]-[ferredoxin] + 2 NADH. Its function is as follows. The Caffeyl-CoA reductase-Etf complex catalyzes the reduction of caffeyl-CoA to yield hydrocaffeyl-CoA. It couples the endergonic ferredoxin reduction with NADH as reductant to the exergonic reduction of caffeoyl-CoA with the same reductant. It uses the mechanism of electron bifurcation to overcome the steep energy barrier in ferredoxin reduction. Also reduces 4-coumaroyl-CoA and feruloyl-CoA. This chain is Caffeyl-CoA reductase-Etf complex subunit CarC, found in Acetobacterium woodii (strain ATCC 29683 / DSM 1030 / JCM 2381 / KCTC 1655 / WB1).